A 242-amino-acid chain; its full sequence is Peptidyl-prolyl cis-trans isomerase FKBP20-2, chloroplastic (242 aa).

The transit peptide at 1 to 31 (MVTILSTPLSPRLTFLCETKLSLSRSNRSVC) directs the protein to the chloroplast. Residues 32 to 67 (CSLSEEPKDQCLSRRSLVYVLVASPCLLLPALSSSA) constitute a thylakoid transit peptide. Residues 138 to 225 (GQQVTFHYIG…VFDVELLSIQ (88 aa)) enclose the PPIase FKBP-type domain. Cys-227 and Cys-241 are oxidised to a cystine.

It belongs to the FKBP-type PPIase family. Interacts in vitro with LTO1.

The protein resides in the plastid. It is found in the chloroplast thylakoid lumen. The enzyme catalyses [protein]-peptidylproline (omega=180) = [protein]-peptidylproline (omega=0). Functionally, PPIases accelerate the folding of proteins. It catalyzes the cis-trans isomerization of proline imidic peptide bonds in oligopeptides. Involved in the accumulation of the PSII complex. The sequence is that of Peptidyl-prolyl cis-trans isomerase FKBP20-2, chloroplastic from Arabidopsis thaliana (Mouse-ear cress).